The primary structure comprises 672 residues: MSKAFKLTSKFKPSGDQPQAIEKLVAGLEDGLAYQTLLGVTGSGKTFTIANAIEKVQRPTLILEPNKTLAAQFYAEMREFFPENAVEYFVSYYDYYQPEAYVPSSDTYIEKDASINDHIEQMRLSATKAITERHDTIIIATVSAIYGLGDPDSYLKMLLHLTRGDQIDQRKILQRLAELQYTRNDLELRRATYRVNGDIIDIYPADSEREAVRVELFDDEVENLSYFDPLTGEMLRRVPRITVYPKTHYVTPREKLLSTLDQIKIELKERLSQLEKANKLVERQRLEQRTKFDMEMILELGYCSGIENYSRYLSGRNEGEPPPTLIDYLPKDALLIIDESHVTIPQLGGMYRGDRARKETLVEYGFRLPSALDNRPLRFDEFEKLAPQTIFISATPGPYEEKQSDQVVELLVRPTGLIDPEIEVRPVATQVDDLLSEIKKRAAQNERVLVTTLTKRMAEDLTEYFTEHNVRVRYLHSDIDTVERVEIIRDLRLGVFDMLVGINLLREGLDIPEVSLVAILDADKEGFLRSERSLIQTMGRAARNVHGKAILYADRITDSMKRAMEEAERRRIAQSAYNEKHHITPKSIQKAVTEIIEGARTYTERGRFVNQAQLIAEEEAKYIAMTPKQLAKELRKLEEQMYHHARNLEFEEAAAVRDKIQHIRKGLLEVKE.

Positions 26–181 constitute a Helicase ATP-binding domain; the sequence is AGLEDGLAYQ…ILQRLAELQY (156 aa). 39 to 46 is an ATP binding site; sequence GVTGSGKT. The short motif at 92 to 115 is the Beta-hairpin element; sequence YYDYYQPEAYVPSSDTYIEKDASI. The region spanning 430-592 is the Helicase C-terminal domain; that stretch reads QVDDLLSEIK…ITPKSIQKAV (163 aa). A UVR domain is found at 631–666; that stretch reads AKELRKLEEQMYHHARNLEFEEAAAVRDKIQHIRKG.

The protein belongs to the UvrB family. In terms of assembly, forms a heterotetramer with UvrA during the search for lesions. Interacts with UvrC in an incision complex.

The protein localises to the cytoplasm. The UvrABC repair system catalyzes the recognition and processing of DNA lesions. A damage recognition complex composed of 2 UvrA and 2 UvrB subunits scans DNA for abnormalities. Upon binding of the UvrA(2)B(2) complex to a putative damaged site, the DNA wraps around one UvrB monomer. DNA wrap is dependent on ATP binding by UvrB and probably causes local melting of the DNA helix, facilitating insertion of UvrB beta-hairpin between the DNA strands. Then UvrB probes one DNA strand for the presence of a lesion. If a lesion is found the UvrA subunits dissociate and the UvrB-DNA preincision complex is formed. This complex is subsequently bound by UvrC and the second UvrB is released. If no lesion is found, the DNA wraps around the other UvrB subunit that will check the other stand for damage. The protein is UvrABC system protein B of Coxiella burnetii (strain CbuK_Q154) (Coxiella burnetii (strain Q154)).